Consider the following 351-residue polypeptide: Spindolin (351 aa).

The N-terminal stretch at 1–20 (MNKFYYICIYINILYVCVSG) is a signal peptide.

As to quaternary structure, homodimer; disulfide-linked.

Its function is as follows. This protein is a spindle body protein. The polypeptide is Spindolin (Lepidoptera (butterflies and moths)).